A 328-amino-acid polypeptide reads, in one-letter code: PLASTID TRANSCRIPTIONALLY ACTIVE protein 6, chloroplastic (328 aa).

Over residues 1–14 (MASSAASPSLSLLS) the composition is skewed to low complexity. The segment at 1–21 (MASSAASPSLSLLSFTSKPPY) is disordered. The N-terminal 59 residues, 1–59 (MASSAASPSLSLLSFTSKPPYPSGSQRLFASFRTDGLFAPLTLKSRRGRGIVVKVDDVD), are a transit peptide targeting the chloroplast. Residues 267 to 275 (RKRDRKDDL) carry the Nuclear localization signal motif. An RNA binding domain motif is present at residues 301–319 (EREEWTKTREDMEKHLRKL).

In terms of assembly, subunit of the plastid-encoded RNA polymerase (PEP) complex. Component of a large nuclear subcomplex that may include other PEP subunits (e.g. PTAC12/HMR/PAP5, PTAC14/PAP7 and PTAC7/PAP12). Binds directly to PTAC12/HMR/PAP5 in the nucleus. Interacts with MTERF5. Mostly expressed in rosette leaves, stems and flowers, and, to a lower extent, in roots and cauline leaves.

The protein resides in the plastid. The protein localises to the chloroplast. It localises to the chloroplast thylakoid. It is found in the nucleus. Its subcellular location is the nucleoplasm. In terms of biological role, essential protein involved in plastid gene expression and in chloroplast biogenesis. Links photomorphogenesis and chloroplast biogenesis through its dual localization; required for the formation of late photobodies in the nucleus, as well as for phytochrome B-mediated signaling cascade and subsequent reshaping of the plastid-encoded RNA polymerase (PEP) activity. Binds RNA via specific recognition motifs of viral origin. Recruited by MTERF5 to the transcriptionally paused region of psbEFLJ. Promotes leaf greening. The chain is PLASTID TRANSCRIPTIONALLY ACTIVE protein 6, chloroplastic from Arabidopsis thaliana (Mouse-ear cress).